A 109-amino-acid chain; its full sequence is UPF0060 membrane protein PA14_21660 (109 aa).

4 helical membrane-spanning segments follow: residues 5–25 (LWFV…YLWL), 27–47 (LGKS…FALL), 59–79 (AYAA…AFVE), and 84–104 (LWSD…VLFG).

The protein belongs to the UPF0060 family.

Its subcellular location is the cell inner membrane. The polypeptide is UPF0060 membrane protein PA14_21660 (Pseudomonas aeruginosa (strain UCBPP-PA14)).